A 503-amino-acid chain; its full sequence is Podocalyxin (503 aa).

An N-terminal signal peptide occupies residues 1–21; sequence MPPTTALSALLLLLLSPASHS. Residues 19–236 are disordered; it reads SHSHNGNETS…PLTSQTPGIT (218 aa). A compositionally biased stretch (polar residues) spans 20-50; it reads HSHNGNETSTSAIKSSTVQSHQSATTSTEVT. The Extracellular segment spans residues 22 to 404; sequence HNGNETSTSA…PPEVNEDRFS (383 aa). N-linked (GlcNAc...) asparagine glycans are attached at residues Asn-25, Asn-89, and Asn-94. Low complexity predominate over residues 61-91; sequence STQPSNPTPFTTSTQSPSMPTSTPNPTSNQS. Residues 107–126 show a composition bias toward low complexity; that stretch reads TSSPSSTAFTSSSGQTASSG. Residues 131 to 183 are compositionally biased toward polar residues; sequence DSFTTAPTTTLGLINVSSQPTDLNTTSKLLSTPTTDNTTSPQQPVDSSPSTAS. N-linked (GlcNAc...) asparagine glycans are attached at residues Asn-145, Asn-154, Asn-167, and Asn-206. Over residues 196–208 the composition is skewed to low complexity; it reads SSSGSTPSTDNST. Residues 222 to 236 are compositionally biased toward polar residues; that stretch reads SEATQPLTSQTPGIT. The N-linked (GlcNAc...) asparagine glycan is linked to Asn-303. The chain crosses the membrane as a helical span at residues 405–425; the sequence is LPLIITIVCMASFLLLVAALY. Over 426-503 the chain is Cytoplasmic; the sequence is GCCHQRISQR…DLDEEEDTHL (78 aa). Thr-463 bears the Phosphothreonine mark. Ser-482 carries the phosphoserine modification. Thr-501 carries the phosphothreonine modification.

The protein belongs to the podocalyxin family. As to quaternary structure, monomer; when associated with the membrane raft. Oligomer; when integrated in the apical membrane. Found in a complex with EZR, PODXL and NHERF2. Associates with the actin cytoskeleton through complex formation with EZR and NHERF2. Interacts (via the C-terminal PDZ-binding motif DTHL) with NHERF1 (via the PDZ domains); interaction is not detected in glomerular epithelium cells, take place early in the secretory pathway and is necessary for its apical membrane sorting. Interacts (via the C-terminal PDZ-binding motif DTHL) with NHERF2 (via the PDZ 1 domain); interaction is detected in glomerular epithelium cells. Interacts with EZR. Post-translationally, N- and O-linked glycosylated. Sialoglycoprotein. Expressed in liver cells and hematopoietic cells (at protein level). Glomerular epithelium cell (podocyte).

The protein resides in the apical cell membrane. It is found in the cell projection. The protein localises to the microvillus. It localises to the membrane raft. Its subcellular location is the lamellipodium. The protein resides in the filopodium. It is found in the ruffle. The protein localises to the membrane. Its function is as follows. Involved in the regulation of both adhesion and cell morphology and cancer progression. Functions as an anti-adhesive molecule that maintains an open filtration pathway between neighboring foot processes in the podocyte by charge repulsion. Acts as a pro-adhesive molecule, enhancing the adherence of cells to immobilized ligands, increasing the rate of migration and cell-cell contacts in an integrin-dependent manner. Induces the formation of apical actin-dependent microvilli. Involved in the formation of a preapical plasma membrane subdomain to set up initial epithelial polarization and the apical lumen formation during renal tubulogenesis. Plays a role in cancer development and aggressiveness by inducing cell migration and invasion through its interaction with the actin-binding protein EZR. Affects EZR-dependent signaling events, leading to increased activities of the MAPK and PI3K pathways in cancer cells. The protein is Podocalyxin (Podxl) of Mus musculus (Mouse).